Reading from the N-terminus, the 254-residue chain is Phosphoribosylaminoimidazole-succinocarboxamide synthase (254 aa).

The protein belongs to the SAICAR synthetase family.

The catalysed reaction is 5-amino-1-(5-phospho-D-ribosyl)imidazole-4-carboxylate + L-aspartate + ATP = (2S)-2-[5-amino-1-(5-phospho-beta-D-ribosyl)imidazole-4-carboxamido]succinate + ADP + phosphate + 2 H(+). Its pathway is purine metabolism; IMP biosynthesis via de novo pathway; 5-amino-1-(5-phospho-D-ribosyl)imidazole-4-carboxamide from 5-amino-1-(5-phospho-D-ribosyl)imidazole-4-carboxylate: step 1/2. This chain is Phosphoribosylaminoimidazole-succinocarboxamide synthase, found in Bartonella quintana (strain Toulouse) (Rochalimaea quintana).